A 217-amino-acid chain; its full sequence is 3-demethoxyubiquinol 3-hydroxylase (217 aa).

Positions 66, 96, 99, 148, 180, and 183 each coordinate Fe cation.

Belongs to the COQ7 family. Fe cation serves as cofactor.

It is found in the cell membrane. The catalysed reaction is a 5-methoxy-2-methyl-3-(all-trans-polyprenyl)benzene-1,4-diol + AH2 + O2 = a 3-demethylubiquinol + A + H2O. The protein operates within cofactor biosynthesis; ubiquinone biosynthesis. Catalyzes the hydroxylation of 2-nonaprenyl-3-methyl-6-methoxy-1,4-benzoquinol during ubiquinone biosynthesis. The chain is 3-demethoxyubiquinol 3-hydroxylase from Xanthomonas oryzae pv. oryzae (strain MAFF 311018).